The sequence spans 440 residues: Phenylacetate-coenzyme A ligase (440 aa).

This sequence belongs to the phenylacetyl-CoA ligase family. Monomer.

It catalyses the reaction 2-phenylacetate + ATP + CoA = phenylacetyl-CoA + AMP + diphosphate. The protein operates within aromatic compound metabolism; phenylacetate degradation. Its activity is regulated as follows. Inhibition of activity is observed in the presence of a 1 mM of the divalent cations zinc, copper, and nickel. Functionally, catalyzes the activation of phenylacetic acid (PA) to phenylacetyl-CoA (PA-CoA). Involved in the phenylalanine metabolism. The chain is Phenylacetate-coenzyme A ligase (paaK) from Aromatoleum evansii (Azoarcus evansii).